Reading from the N-terminus, the 571-residue chain is Urease subunit alpha (571 aa).

Positions 133 to 571 constitute a Urease domain; it reads GGIDTHVHFI…LPLTQRYFLF (439 aa). Residues His138, His140, and Lys221 each contribute to the Ni(2+) site. Position 221 is an N6-carboxylysine (Lys221). Substrate is bound at residue His223. Residues His250 and His276 each contribute to the Ni(2+) site. The active-site Proton donor is the His324. Asp364 provides a ligand contact to Ni(2+).

It belongs to the metallo-dependent hydrolases superfamily. Urease alpha subunit family. As to quaternary structure, heterotrimer of UreA (gamma), UreB (beta) and UreC (alpha) subunits. Three heterotrimers associate to form the active enzyme. Requires Ni cation as cofactor. In terms of processing, carboxylation allows a single lysine to coordinate two nickel ions.

The protein resides in the cytoplasm. It catalyses the reaction urea + 2 H2O + H(+) = hydrogencarbonate + 2 NH4(+). Its pathway is nitrogen metabolism; urea degradation; CO(2) and NH(3) from urea (urease route): step 1/1. The polypeptide is Urease subunit alpha (Staphylococcus aureus (strain bovine RF122 / ET3-1)).